Reading from the N-terminus, the 248-residue chain is Peptidyl-tRNA hydrolase (248 aa).

Tyr14 is a tRNA binding site. Residue His19 is the Proton acceptor of the active site. The tRNA site is built by Phe64, Asn66, and Asn112. Positions 190–248 (PRSSTGEASKGRKKAQKSEPGVAKTPAKAATPEAPAAGDIPAAPEDSRSPMQKLLDKFK) are disordered. Positions 212–226 (AKTPAKAATPEAPAA) are enriched in low complexity.

Belongs to the PTH family. Monomer.

It localises to the cytoplasm. It carries out the reaction an N-acyl-L-alpha-aminoacyl-tRNA + H2O = an N-acyl-L-amino acid + a tRNA + H(+). Hydrolyzes ribosome-free peptidyl-tRNAs (with 1 or more amino acids incorporated), which drop off the ribosome during protein synthesis, or as a result of ribosome stalling. In terms of biological role, catalyzes the release of premature peptidyl moieties from peptidyl-tRNA molecules trapped in stalled 50S ribosomal subunits, and thus maintains levels of free tRNAs and 50S ribosomes. This Ruegeria sp. (strain TM1040) (Silicibacter sp.) protein is Peptidyl-tRNA hydrolase.